The primary structure comprises 254 residues: Nickel import ATP-binding protein NikO (254 aa).

One can recognise an ABC transporter domain in the interval 5–246; it reads FELQGVQFAY…TALLRRARLL (242 aa). Residue 37–44 participates in ATP binding; the sequence is GANGSGKS.

Belongs to the ABC transporter superfamily. Forms an energy-coupling factor (ECF) transporter complex composed of an ATP-binding protein (A component, NikO), a transmembrane protein (T component, NikQ) and a fused possible substrate-capture protein (S component, NikMN) of unknown stoichimetry.

The protein resides in the cell inner membrane. It catalyses the reaction Ni(2+)(out) + ATP + H2O = Ni(2+)(in) + ADP + phosphate + H(+). Functionally, part of the energy-coupling factor (ECF) transporter complex NikMNQO involved in nickel import. The complex confers nickel uptake upon expression in E.coli. Shows very low activity with cobalt. Presumably responsible for energy coupling to the transport system. This is Nickel import ATP-binding protein NikO from Rhodobacter capsulatus (strain ATCC BAA-309 / NBRC 16581 / SB1003).